The primary structure comprises 414 residues: Multifunctional CCA protein (414 aa).

2 residues coordinate ATP: Gly-8 and Arg-11. CTP contacts are provided by Gly-8 and Arg-11. Residues Glu-21 and Asp-23 each coordinate Mg(2+). ATP is bound by residues Arg-91, Arg-137, and Arg-140. Residues Arg-91, Arg-137, and Arg-140 each coordinate CTP. Residues 228–329 (TGIHTMMTVA…LKLFDAIDVW (102 aa)) enclose the HD domain.

This sequence belongs to the tRNA nucleotidyltransferase/poly(A) polymerase family. Bacterial CCA-adding enzyme type 1 subfamily. Monomer. Can also form homodimers and oligomers. Requires Mg(2+) as cofactor. Ni(2+) serves as cofactor.

It carries out the reaction a tRNA precursor + 2 CTP + ATP = a tRNA with a 3' CCA end + 3 diphosphate. The catalysed reaction is a tRNA with a 3' CCA end + 2 CTP + ATP = a tRNA with a 3' CCACCA end + 3 diphosphate. Functionally, catalyzes the addition and repair of the essential 3'-terminal CCA sequence in tRNAs without using a nucleic acid template. Adds these three nucleotides in the order of C, C, and A to the tRNA nucleotide-73, using CTP and ATP as substrates and producing inorganic pyrophosphate. tRNA 3'-terminal CCA addition is required both for tRNA processing and repair. Also involved in tRNA surveillance by mediating tandem CCA addition to generate a CCACCA at the 3' terminus of unstable tRNAs. While stable tRNAs receive only 3'-terminal CCA, unstable tRNAs are marked with CCACCA and rapidly degraded. This chain is Multifunctional CCA protein, found in Pectobacterium atrosepticum (strain SCRI 1043 / ATCC BAA-672) (Erwinia carotovora subsp. atroseptica).